The primary structure comprises 115 residues: Divalent-cation tolerance protein CutA (115 aa).

Residues Cys19, His86, and His87 each coordinate Cu cation.

It belongs to the CutA family. As to quaternary structure, homotrimer. Requires Cu cation as cofactor.

Its subcellular location is the cytoplasm. In terms of biological role, involved in resistance toward heavy metals. The protein is Divalent-cation tolerance protein CutA of Citrobacter koseri (strain ATCC BAA-895 / CDC 4225-83 / SGSC4696).